A 194-amino-acid polypeptide reads, in one-letter code: Orotate phosphoribosyltransferase (194 aa).

Residue 117 to 125 coordinates 5-phospho-alpha-D-ribose 1-diphosphate; the sequence is EDIVTTGLS. Residues T121 and R149 each coordinate orotate.

This sequence belongs to the purine/pyrimidine phosphoribosyltransferase family. PyrE subfamily. In terms of assembly, homodimer. Requires Mg(2+) as cofactor.

It carries out the reaction orotidine 5'-phosphate + diphosphate = orotate + 5-phospho-alpha-D-ribose 1-diphosphate. The protein operates within pyrimidine metabolism; UMP biosynthesis via de novo pathway; UMP from orotate: step 1/2. In terms of biological role, catalyzes the transfer of a ribosyl phosphate group from 5-phosphoribose 1-diphosphate to orotate, leading to the formation of orotidine monophosphate (OMP). The protein is Orotate phosphoribosyltransferase of Parvibaculum lavamentivorans (strain DS-1 / DSM 13023 / NCIMB 13966).